Reading from the N-terminus, the 150-residue chain is UPF0178 protein Sbal195_1808 (150 aa).

This sequence belongs to the UPF0178 family.

This is UPF0178 protein Sbal195_1808 from Shewanella baltica (strain OS195).